Here is a 357-residue protein sequence, read N- to C-terminus: Norreticuline-7-O-methyltransferase (357 aa).

Position 225 (Asp225) interacts with S-adenosyl-L-methionine. His263 (proton acceptor) is an active-site residue.

It belongs to the class I-like SAM-binding methyltransferase superfamily. Cation-independent O-methyltransferase family. In terms of tissue distribution, expressed instems, leaves, roots and seedlings.

In terms of biological role, involved in the biosynthesis of benzylisoquinoline alkaloids. Catalyzes specifically the methylation of norreticuline at position seven to produce norlaudanine. No activity with norcoclaurine, reticuline, norlaudanosoline, norisoorientaline, scoulerine, salutaridinol, oripavine, salsolinol, codeine or morphine. Involved in papaverine biosynthesis. The protein is Norreticuline-7-O-methyltransferase of Papaver somniferum (Opium poppy).